A 500-amino-acid chain; its full sequence is Protein nucleotidyltransferase YdiU (500 aa).

Gly-96, Gly-98, Arg-99, Lys-119, Asp-131, Gly-132, Arg-182, and Arg-189 together coordinate ATP. The Proton acceptor role is filled by Asp-258. Residues Asn-259 and Asp-268 each contribute to the Mg(2+) site. ATP is bound at residue Asp-268.

This sequence belongs to the SELO family. The cofactor is Mg(2+). Requires Mn(2+) as cofactor.

The enzyme catalyses L-seryl-[protein] + ATP = 3-O-(5'-adenylyl)-L-seryl-[protein] + diphosphate. It catalyses the reaction L-threonyl-[protein] + ATP = 3-O-(5'-adenylyl)-L-threonyl-[protein] + diphosphate. The catalysed reaction is L-tyrosyl-[protein] + ATP = O-(5'-adenylyl)-L-tyrosyl-[protein] + diphosphate. It carries out the reaction L-histidyl-[protein] + UTP = N(tele)-(5'-uridylyl)-L-histidyl-[protein] + diphosphate. The enzyme catalyses L-seryl-[protein] + UTP = O-(5'-uridylyl)-L-seryl-[protein] + diphosphate. It catalyses the reaction L-tyrosyl-[protein] + UTP = O-(5'-uridylyl)-L-tyrosyl-[protein] + diphosphate. In terms of biological role, nucleotidyltransferase involved in the post-translational modification of proteins. It can catalyze the addition of adenosine monophosphate (AMP) or uridine monophosphate (UMP) to a protein, resulting in modifications known as AMPylation and UMPylation. This is Protein nucleotidyltransferase YdiU from Rhizobium etli (strain CIAT 652).